Here is a 128-residue protein sequence, read N- to C-terminus: Large ribosomal subunit protein bL12 (128 aa).

It belongs to the bacterial ribosomal protein bL12 family. As to quaternary structure, homodimer. Part of the ribosomal stalk of the 50S ribosomal subunit. Forms a multimeric L10(L12)X complex, where L10 forms an elongated spine to which 2 to 4 L12 dimers bind in a sequential fashion. Binds GTP-bound translation factors.

In terms of biological role, forms part of the ribosomal stalk which helps the ribosome interact with GTP-bound translation factors. Is thus essential for accurate translation. In Rubrobacter xylanophilus (strain DSM 9941 / JCM 11954 / NBRC 16129 / PRD-1), this protein is Large ribosomal subunit protein bL12.